The primary structure comprises 508 residues: 6-phosphogluconate dehydrogenase, decarboxylating 2, chloroplastic (508 aa).

The N-terminal 12 residues, 1–12 (MASPAPAPPAAS), are a transit peptide targeting the chloroplast. Residues 28 to 33 (GLATMG), 51 to 53 (NRT), 95 to 97 (VQA), and asparagine 123 each bind NADP(+). Residues asparagine 123 and 149 to 151 (SGG) each bind substrate. Lysine 203 serves as the catalytic Proton acceptor. 206 to 207 (HN) provides a ligand contact to substrate. The active-site Proton donor is glutamate 210. Positions 211, 284, 311, 475, and 481 each coordinate substrate.

Belongs to the 6-phosphogluconate dehydrogenase family. As to quaternary structure, homodimer.

It is found in the plastid. The protein resides in the chloroplast. It catalyses the reaction 6-phospho-D-gluconate + NADP(+) = D-ribulose 5-phosphate + CO2 + NADPH. It functions in the pathway carbohydrate degradation; pentose phosphate pathway; D-ribulose 5-phosphate from D-glucose 6-phosphate (oxidative stage): step 3/3. Catalyzes the oxidative decarboxylation of 6-phosphogluconate to ribulose 5-phosphate and CO(2), with concomitant reduction of NADP to NADPH. In Oryza sativa subsp. japonica (Rice), this protein is 6-phosphogluconate dehydrogenase, decarboxylating 2, chloroplastic (G6PGH2).